The following is a 455-amino-acid chain: Kynurenine 3-monooxygenase (455 aa).

Belongs to the aromatic-ring hydroxylase family. KMO subfamily. FAD serves as cofactor.

It carries out the reaction L-kynurenine + NADPH + O2 + H(+) = 3-hydroxy-L-kynurenine + NADP(+) + H2O. It functions in the pathway cofactor biosynthesis; NAD(+) biosynthesis; quinolinate from L-kynurenine: step 1/3. In terms of biological role, catalyzes the hydroxylation of L-kynurenine (L-Kyn) to form 3-hydroxy-L-kynurenine (L-3OHKyn). Required for synthesis of quinolinic acid. This chain is Kynurenine 3-monooxygenase, found in Xanthomonas axonopodis pv. citri (strain 306).